Reading from the N-terminus, the 339-residue chain is Phosphate acyltransferase (339 aa).

Belongs to the PlsX family. In terms of assembly, homodimer. Probably interacts with PlsY.

The protein localises to the cytoplasm. It carries out the reaction a fatty acyl-[ACP] + phosphate = an acyl phosphate + holo-[ACP]. Its pathway is lipid metabolism; phospholipid metabolism. Functionally, catalyzes the reversible formation of acyl-phosphate (acyl-PO(4)) from acyl-[acyl-carrier-protein] (acyl-ACP). This enzyme utilizes acyl-ACP as fatty acyl donor, but not acyl-CoA. The chain is Phosphate acyltransferase from Ruthia magnifica subsp. Calyptogena magnifica.